The primary structure comprises 105 residues: Protein METHYLENE BLUE SENSITIVITY 1 (105 aa).

The tract at residues 26–46 (RGGGKAGIADRTGKEKGGHAK) is disordered. Over residues 36-46 (RTGKEKGGHAK) the composition is skewed to basic and acidic residues.

In terms of tissue distribution, mainly expressed in the epidermis.

Its subcellular location is the nucleus. It localises to the cytoplasm. The protein resides in the stress granule. Functionally, required for acclimation to reactive oxygen species (ROS) responses downstream of beta-cyclocitral (beta-cc) or mediated by dihydroactinidiolide, including singlet oxygen 1O(2) detoxification reactions, especially upon light-mediated photooxidative stress, and leading to programmed cell death. Prevents leaf senescence. Involved in cold acclimation. The chain is Protein METHYLENE BLUE SENSITIVITY 1 from Arabidopsis thaliana (Mouse-ear cress).